The sequence spans 213 residues: Large ribosomal subunit protein bL25 (213 aa).

The protein belongs to the bacterial ribosomal protein bL25 family. CTC subfamily. Part of the 50S ribosomal subunit; part of the 5S rRNA/L5/L18/L25 subcomplex. Contacts the 5S rRNA. Binds to the 5S rRNA independently of L5 and L18.

Its function is as follows. This is one of the proteins that binds to the 5S RNA in the ribosome where it forms part of the central protuberance. This chain is Large ribosomal subunit protein bL25, found in Mesorhizobium japonicum (strain LMG 29417 / CECT 9101 / MAFF 303099) (Mesorhizobium loti (strain MAFF 303099)).